We begin with the raw amino-acid sequence, 295 residues long: 4-hydroxy-3-methylbut-2-enyl diphosphate reductase (295 aa).

Residue C12 participates in [4Fe-4S] cluster binding. Residues H43 and H81 each coordinate (2E)-4-hydroxy-3-methylbut-2-enyl diphosphate. The dimethylallyl diphosphate site is built by H43 and H81. Residues H43 and H81 each contribute to the isopentenyl diphosphate site. [4Fe-4S] cluster is bound at residue C103. Residue H131 coordinates (2E)-4-hydroxy-3-methylbut-2-enyl diphosphate. H131 lines the dimethylallyl diphosphate pocket. H131 lines the isopentenyl diphosphate pocket. E133 serves as the catalytic Proton donor. T171 is a (2E)-4-hydroxy-3-methylbut-2-enyl diphosphate binding site. [4Fe-4S] cluster is bound at residue C199. Positions 227, 229, and 272 each coordinate (2E)-4-hydroxy-3-methylbut-2-enyl diphosphate. Residues S227, N229, and S272 each contribute to the dimethylallyl diphosphate site. Positions 227, 229, and 272 each coordinate isopentenyl diphosphate.

It belongs to the IspH family. [4Fe-4S] cluster serves as cofactor.

The catalysed reaction is isopentenyl diphosphate + 2 oxidized [2Fe-2S]-[ferredoxin] + H2O = (2E)-4-hydroxy-3-methylbut-2-enyl diphosphate + 2 reduced [2Fe-2S]-[ferredoxin] + 2 H(+). It catalyses the reaction dimethylallyl diphosphate + 2 oxidized [2Fe-2S]-[ferredoxin] + H2O = (2E)-4-hydroxy-3-methylbut-2-enyl diphosphate + 2 reduced [2Fe-2S]-[ferredoxin] + 2 H(+). It functions in the pathway isoprenoid biosynthesis; dimethylallyl diphosphate biosynthesis; dimethylallyl diphosphate from (2E)-4-hydroxy-3-methylbutenyl diphosphate: step 1/1. The protein operates within isoprenoid biosynthesis; isopentenyl diphosphate biosynthesis via DXP pathway; isopentenyl diphosphate from 1-deoxy-D-xylulose 5-phosphate: step 6/6. In terms of biological role, catalyzes the conversion of 1-hydroxy-2-methyl-2-(E)-butenyl 4-diphosphate (HMBPP) into a mixture of isopentenyl diphosphate (IPP) and dimethylallyl diphosphate (DMAPP). Acts in the terminal step of the DOXP/MEP pathway for isoprenoid precursor biosynthesis. The sequence is that of 4-hydroxy-3-methylbut-2-enyl diphosphate reductase from Symbiobacterium thermophilum (strain DSM 24528 / JCM 14929 / IAM 14863 / T).